A 156-amino-acid polypeptide reads, in one-letter code: Small ribosomal subunit protein uS7 (156 aa).

This sequence belongs to the universal ribosomal protein uS7 family. Part of the 30S ribosomal subunit. Contacts proteins S9 and S11.

Its function is as follows. One of the primary rRNA binding proteins, it binds directly to 16S rRNA where it nucleates assembly of the head domain of the 30S subunit. Is located at the subunit interface close to the decoding center, probably blocks exit of the E-site tRNA. This chain is Small ribosomal subunit protein uS7, found in Frankia alni (strain DSM 45986 / CECT 9034 / ACN14a).